Consider the following 481-residue polypeptide: Serine/threonine-protein kinase US3 (481 aa).

Residues 12–63 (RPDKRQEASVPPETNTAPAFPASTFYTPAEDAYLAPGPPETIHPSRPPSPGE) are disordered. Pro residues predominate over residues 47–61 (PGPPETIHPSRPPSP). In terms of domain architecture, Protein kinase spans 191 to 478 (FAIHGALIPG…AAELLRLPLF (288 aa)). Residues 197 to 205 (LIPGSEGCV) and K220 each bind ATP. D305 (proton acceptor) is an active-site residue.

This sequence belongs to the protein kinase superfamily. Ser/Thr protein kinase family. Interacts with host LAT; this interaction prevents LAT activation of TRAF6. In terms of processing, phosphorylated by UL13; this phosphorylation regulates subsequent phosphorylation of UL31 and UL34 by US3. Autophosphorylated.

It is found in the host cytoplasm. The protein resides in the host nucleus. It catalyses the reaction L-seryl-[protein] + ATP = O-phospho-L-seryl-[protein] + ADP + H(+). The catalysed reaction is L-threonyl-[protein] + ATP = O-phospho-L-threonyl-[protein] + ADP + H(+). Functionally, multifunctional serine/threonine kinase that plays a role in several processes including egress of virus particles from the nucleus, modulation of the actin cytoskeleton and inhibition of host immune response. Phosphorylates UL31 and UL34, two critical regulators of capsid budding from nucleus to endoplasmic reticulum, thereby facilitating virion egress. Modulates and redistributes host components of the nuclear envelope, including LMNA, emerin/EMD and the nuclear matrix protein MATR3. In turn, facilitates nuclear pore impairment and capsid release through impaired nuclear envelope. Phosphorylates envelope glycoprotein B (gB), probably to direct it to the cell surface. Promotes virus intracellular spread by restructuring host cell cytoskeleton. Blocks host apoptosis to extend cell survival and allow efficient viral replication. Promotes viral gene expression by phosphorylating host HDAC2 to reduce viral genome silencing. Strongly inhibits TCR-activated signal transduction in T-cells by reducing the ubiquitination of LAT and TRAF6, leading to a suboptimal activation of LAT. Subverts host antiviral innate immunity by inhibiting type I interferon production through hyperphosphorylation of beta-catenin/CTNNB1. In addition, phosphorylates the RNA sensor RIGI and the transcription factor IRF3 to prevent the RLR-mediated antiviral signaling pathway. Hyperphosphorylates host RELA and thereby dampens NF-kappa-B signaling. Acts as an immunoevasin partly responsible for inhibition of MR1 expression and antigen presentation in response to bacterial infection. In Human herpesvirus 2 (strain HG52) (HHV-2), this protein is Serine/threonine-protein kinase US3 (US3).